The following is a 71-amino-acid chain: MAILYTSEIRDMTPAEREAELEELRTELLNSKAVKAAGGAPDNPGRISELRKTIARIKTVQREEGDLADDE.

It belongs to the universal ribosomal protein uL29 family.

This chain is Large ribosomal subunit protein uL29 (rpl29), found in Halobacterium salinarum (strain ATCC 700922 / JCM 11081 / NRC-1) (Halobacterium halobium).